We begin with the raw amino-acid sequence, 310 residues long: Protein-L-isoaspartate O-methyltransferase (310 aa).

The segment at 1–41 (MSGERAKRFPLALEDLKRAPRKSEGRPGERQTAGAVPKAAD) is disordered. Residues 14 to 29 (EDLKRAPRKSEGRPGE) are compositionally biased toward basic and acidic residues. The active site involves Ser-157.

This sequence belongs to the methyltransferase superfamily. L-isoaspartyl/D-aspartyl protein methyltransferase family.

It localises to the cytoplasm. It carries out the reaction [protein]-L-isoaspartate + S-adenosyl-L-methionine = [protein]-L-isoaspartate alpha-methyl ester + S-adenosyl-L-homocysteine. In terms of biological role, catalyzes the methyl esterification of L-isoaspartyl residues in peptides and proteins that result from spontaneous decomposition of normal L-aspartyl and L-asparaginyl residues. It plays a role in the repair and/or degradation of damaged proteins. The protein is Protein-L-isoaspartate O-methyltransferase of Burkholderia cenocepacia (strain HI2424).